The primary structure comprises 102 residues: Large ribosomal subunit protein bL21 (102 aa).

It belongs to the bacterial ribosomal protein bL21 family. Part of the 50S ribosomal subunit. Contacts protein L20.

In terms of biological role, this protein binds to 23S rRNA in the presence of protein L20. This Leifsonia xyli subsp. xyli (strain CTCB07) protein is Large ribosomal subunit protein bL21.